The following is a 520-amino-acid chain: F-box/LRR-repeat protein At3g59200 (520 aa).

Positions 6–54 (RDRISSLPNPVVSHILSFLPTKEAASTSVLSKKWRYLFAYVTNLDFDDS) constitute an F-box domain. 3 LRR repeats span residues 170 to 197 (CVDV…VLMN), 219 to 244 (FCEE…EYSD), and 340 to 365 (NSEI…VLKR).

This Arabidopsis thaliana (Mouse-ear cress) protein is F-box/LRR-repeat protein At3g59200.